We begin with the raw amino-acid sequence, 410 residues long: Lipoyl synthase, mitochondrial (410 aa).

Cysteine 134, cysteine 139, cysteine 145, cysteine 165, cysteine 169, cysteine 172, and serine 390 together coordinate [4Fe-4S] cluster. The Radical SAM core domain maps to 148 to 379 (AGKSTAATAT…AKIGNDLGFL (232 aa)).

This sequence belongs to the radical SAM superfamily. Lipoyl synthase family. It depends on [4Fe-4S] cluster as a cofactor.

It localises to the mitochondrion. It catalyses the reaction [[Fe-S] cluster scaffold protein carrying a second [4Fe-4S](2+) cluster] + N(6)-octanoyl-L-lysyl-[protein] + 2 oxidized [2Fe-2S]-[ferredoxin] + 2 S-adenosyl-L-methionine + 4 H(+) = [[Fe-S] cluster scaffold protein] + N(6)-[(R)-dihydrolipoyl]-L-lysyl-[protein] + 4 Fe(3+) + 2 hydrogen sulfide + 2 5'-deoxyadenosine + 2 L-methionine + 2 reduced [2Fe-2S]-[ferredoxin]. The protein operates within protein modification; protein lipoylation via endogenous pathway; protein N(6)-(lipoyl)lysine from octanoyl-[acyl-carrier-protein]: step 2/2. Functionally, catalyzes the radical-mediated insertion of two sulfur atoms into the C-6 and C-8 positions of the octanoyl moiety bound to the lipoyl domains of lipoate-dependent enzymes, thereby converting the octanoylated domains into lipoylated derivatives. In Schistosoma mansoni (Blood fluke), this protein is Lipoyl synthase, mitochondrial.